The sequence spans 679 residues: Sodium-dependent phosphate transporter 1 (679 aa).

6 helical membrane passes run Y21–A41, A62–S82, G100–A120, I158–F178, A203–F223, and G230–V250. A phosphoserine mark is found at S265 and S269. The tract at residues E268–S288 is disordered. Basic and acidic residues predominate over residues L271–K286. A run of 4 helical transmembrane segments spans residues V511–G531, V558–V578, F600–I620, and I650–A670. Positions D550–V558 are a.

This sequence belongs to the inorganic phosphate transporter (PiT) (TC 2.A.20) family.

The protein resides in the cell membrane. It catalyses the reaction 2 Na(+)(out) + phosphate(out) = 2 Na(+)(in) + phosphate(in). Functionally, sodium-phosphate symporter which preferentially transports the monovalent form of phosphate with a stoichiometry of two sodium ions per phosphate ion. May play a role in extracellular matrix and cartilage calcification as well as in vascular calcification. Essential for cell proliferation but this function is independent of its phosphate transporter activity. This chain is Sodium-dependent phosphate transporter 1 (SLC20A1), found in Pongo abelii (Sumatran orangutan).